A 430-amino-acid chain; its full sequence is GTPase Obg (430 aa).

Positions 1–158 (MFVDQVKISL…LDVSLELKLL (158 aa)) constitute an Obg domain. A disordered region spans residues 118–145 (KGGRGGRGNSRFATPRNPAPDFSEKGEP). Residues 159–329 (ADVGLVGFPS…LLYAIADKLE (171 aa)) form the OBG-type G domain. GTP is bound by residues 165-172 (GFPSVGKS), 190-194 (FTTIK), 212-215 (DLPG), 282-285 (NKMD), and 310-312 (STI). Mg(2+) contacts are provided by serine 172 and threonine 192. Residues 352-430 (KHTPSQDKFT…ILGGEFEFVE (79 aa)) form the OCT domain.

This sequence belongs to the TRAFAC class OBG-HflX-like GTPase superfamily. OBG GTPase family. Monomer. Mg(2+) serves as cofactor.

The protein localises to the cytoplasm. Functionally, an essential GTPase which binds GTP, GDP and possibly (p)ppGpp with moderate affinity, with high nucleotide exchange rates and a fairly low GTP hydrolysis rate. Plays a role in control of the cell cycle, stress response, ribosome biogenesis and in those bacteria that undergo differentiation, in morphogenesis control. This chain is GTPase Obg, found in Staphylococcus aureus (strain bovine RF122 / ET3-1).